A 331-amino-acid polypeptide reads, in one-letter code: MATFVSELEAAKKSLSEALGENVKQYWANLKLWFKQKISKEEFDIEARRLLTQENVHSHNDFLLAILTRCQILISAPEGSGSLNSATKPGKPKGKKKISSVRQKFDHRFQPQNPLAGAQQFVSRDPQEDDELKLCSHTMSLPTRGQLEGRMIVTAFEHGLDNVTEEAVTIVICALEKHLKDLLTSVVSRRKAHRLKDGHFRYAFGCNVNPQPYLRNSLAAYNQLIECPPVLSSPTGTPNSGTYVHPDDAEQQAALLLACSGDNLPASLPPVNMYDLLEGLQVHREVIPSHTVYALNMERILMKLWHPNREELQQDEIHRQRLAAKEGLLLC.

Residues glycine 81–arginine 102 form a disordered region. Residues glycine 90–serine 99 are compositionally biased toward basic residues.

It belongs to the TADA1 family.

It localises to the nucleus. Functionally, probably involved in transcriptional regulation. The polypeptide is Transcriptional adapter 1 (tada1) (Xenopus laevis (African clawed frog)).